The chain runs to 925 residues: MDYGKTLNLPVTDFPMRGNLPEREPEILAYWQKIDLYRKVQQKNEGRPKFILHDGPPYANGDIHMGHVLNKVLKDMIVKFKSMDGYDAPYVPGWDTHGLPIEQRAIKDLGINRKEISPLEFRAKCREYAEKYARIQKEQFKRLGVRGDWENPYLTLMPHYEAKQIEIFGEMAKKGYIYKGLKPVYWCPVCETALAEAEIEYAEKKSPSIYVRFKVVEGKGKVPEDAYLVIWTTTPWTLPANVAIAVHPEFTYALVKTEKGDYVVAEGLVQQFFEATKLTGEIVARFKGEELLGVVTRHPFIERESPVVLADYVTLESGTGLVHTAPGHGTEDFETGKKYNLPVLSPVNHQGVFTEGAGKYAGMKIDDGNKAITQDLEASGDLLAMSFIKHSYPHCWRCKNPVIFRATEQWFASIDGFREQALKEIEKVEWIPAWGKDRIYNMVRDRGDWCISRQRTWGVPIPIFYCEACGKEIITDESIKAVSDLFRVEGSDAWWKYEAGEILPDGFRCPHCGGVKFRKETDIMDVWFDSGSSHAAVLEQPEYWPDLRWPADLYLEGSDQHRGWFNSSLSTAVATRGMAPYKAVLTHGFLVDEKGRKMSKSLGNVVDPLKVIKELGADILRLWVASADYRSDLAISNNILKQTAEGYRKIRNTIRFLLGNLYDYDHEKHRVPYERLLEIDRWALAKLHRLIARVVRAYRDYEFHVVFHAVHNFCTVDMSAIYLDIIKDRLYVELPDSEKRRSAQTVLYEILDSLLRLLTPILAFTTEEAYRHFPAKGKKESVQLLDMPKVEERYLDLTLEETWDKILEVRAKVLKALEIARQEKLIGHSLDAWVTLKASGELYDFLVERVNMWPEIFIVSQVDIQNEEVTGENGELPLEVVVNKALGEKCQRCWMYSPEVGLDPEFPDTCPRCAGVLHELKNRPL.

A 'HIGH' region motif is present at residues 57–67; the sequence is PYANGDIHMGH. Residue glutamate 556 coordinates L-isoleucyl-5'-AMP. A 'KMSKS' region motif is present at residues 597–601; sequence KMSKS. Position 600 (lysine 600) interacts with ATP. Cysteine 890, cysteine 893, cysteine 910, and cysteine 913 together coordinate Zn(2+).

The protein belongs to the class-I aminoacyl-tRNA synthetase family. IleS type 1 subfamily. As to quaternary structure, monomer. It depends on Zn(2+) as a cofactor.

The protein localises to the cytoplasm. It carries out the reaction tRNA(Ile) + L-isoleucine + ATP = L-isoleucyl-tRNA(Ile) + AMP + diphosphate. In terms of biological role, catalyzes the attachment of isoleucine to tRNA(Ile). As IleRS can inadvertently accommodate and process structurally similar amino acids such as valine, to avoid such errors it has two additional distinct tRNA(Ile)-dependent editing activities. One activity is designated as 'pretransfer' editing and involves the hydrolysis of activated Val-AMP. The other activity is designated 'posttransfer' editing and involves deacylation of mischarged Val-tRNA(Ile). In Carboxydothermus hydrogenoformans (strain ATCC BAA-161 / DSM 6008 / Z-2901), this protein is Isoleucine--tRNA ligase.